An 842-amino-acid chain; its full sequence is DNA topoisomerase-like protein cin-4 (842 aa).

Basic and acidic residues predominate over residues 1–26 (MSEEDRNVFTSIDKKGGGSKQMDDLN). The tract at residues 1 to 50 (MSEEDRNVFTSIDKKGGGSKQMDDLNQKCPKRKTSKLKGIPKLEDANDAG) is disordered. The Topo IIA-type catalytic domain maps to 314–783 (IPCLVDGLKP…TWQDLWITDL (470 aa)).

The protein belongs to the type II topoisomerase family.

Plays a role in the removal of cohesin from kinetochores on mitotic chromosomes and is required for centromere resolution. This Caenorhabditis elegans protein is DNA topoisomerase-like protein cin-4.